We begin with the raw amino-acid sequence, 631 residues long: DDB1- and CUL4-associated factor 8-like protein 2 (631 aa).

2 disordered regions span residues Met1 to Glu91 and Glu108 to Tyr163. Positions Ser44–Gly54 are enriched in polar residues. Acidic residues-rich tracts occupy residues Ser77–Glu88 and Glu108–Glu147. 7 WD repeats span residues Asp226–Asn265, Gly269–Asn310, Gln316–Lys356, Asp364–Asn404, Asp420–Tyr459, Arg467–Phe507, and Ser511–Leu550. The interval Gln594–Ser631 is disordered.

Belongs to the WD repeat DCAF8 family.

This Homo sapiens (Human) protein is DDB1- and CUL4-associated factor 8-like protein 2 (DCAF8L2).